The following is a 1072-amino-acid chain: Carbamoyl phosphate synthase large chain (1072 aa).

The interval 1-401 (MPKRLDINTI…SLLKAVRSLE (401 aa)) is carboxyphosphate synthetic domain. ATP contacts are provided by Arg-129, Arg-169, Gly-175, Gly-176, Lys-208, Ile-210, Glu-215, Gly-241, Val-242, His-243, Gln-284, and Glu-298. In terms of domain architecture, ATP-grasp 1 spans 133–327 (RTLMQELNEP…IAKLAAKIAV (195 aa)). The Mg(2+) site is built by Gln-284, Glu-298, and Asn-300. 3 residues coordinate Mn(2+): Gln-284, Glu-298, and Asn-300. An oligomerization domain region spans residues 402–546 (LGIYHLELDH…YSTYADENES (145 aa)). A carbamoyl phosphate synthetic domain region spans residues 547–929 (IVTDRKSVVV…ALYKGLVASG (383 aa)). The 191-residue stretch at 671 to 861 (EAALTKLGIP…MANVATKVIL (191 aa)) folds into the ATP-grasp 2 domain. ATP is bound by residues Arg-707, Arg-746, Glu-752, Gly-777, Val-778, His-779, Ser-780, Gln-820, and Glu-832. Residues Gln-820, Glu-832, and Asn-834 each contribute to the Mg(2+) site. Mn(2+)-binding residues include Gln-820, Glu-832, and Asn-834. Residues 930–1072 (INIPTHGSVI…QTKRHEVVHA (143 aa)) form the MGS-like domain. The allosteric domain stretch occupies residues 930 to 1072 (INIPTHGSVI…QTKRHEVVHA (143 aa)).

This sequence belongs to the CarB family. As to quaternary structure, composed of two chains; the small (or glutamine) chain promotes the hydrolysis of glutamine to ammonia, which is used by the large (or ammonia) chain to synthesize carbamoyl phosphate. Tetramer of heterodimers (alpha,beta)4. The cofactor is Mg(2+). Requires Mn(2+) as cofactor.

It catalyses the reaction hydrogencarbonate + L-glutamine + 2 ATP + H2O = carbamoyl phosphate + L-glutamate + 2 ADP + phosphate + 2 H(+). It carries out the reaction hydrogencarbonate + NH4(+) + 2 ATP = carbamoyl phosphate + 2 ADP + phosphate + 2 H(+). Its pathway is amino-acid biosynthesis; L-arginine biosynthesis; carbamoyl phosphate from bicarbonate: step 1/1. The protein operates within pyrimidine metabolism; UMP biosynthesis via de novo pathway; (S)-dihydroorotate from bicarbonate: step 1/3. Functionally, large subunit of the glutamine-dependent carbamoyl phosphate synthetase (CPSase). CPSase catalyzes the formation of carbamoyl phosphate from the ammonia moiety of glutamine, carbonate, and phosphate donated by ATP, constituting the first step of 2 biosynthetic pathways, one leading to arginine and/or urea and the other to pyrimidine nucleotides. The large subunit (synthetase) binds the substrates ammonia (free or transferred from glutamine from the small subunit), hydrogencarbonate and ATP and carries out an ATP-coupled ligase reaction, activating hydrogencarbonate by forming carboxy phosphate which reacts with ammonia to form carbamoyl phosphate. The sequence is that of Carbamoyl phosphate synthase large chain from Bacillus thuringiensis subsp. konkukian (strain 97-27).